A 325-amino-acid polypeptide reads, in one-letter code: ATP phosphoribosyltransferase (325 aa).

It belongs to the ATP phosphoribosyltransferase family. Long subfamily. The cofactor is Mg(2+).

Its subcellular location is the cytoplasm. The catalysed reaction is 1-(5-phospho-beta-D-ribosyl)-ATP + diphosphate = 5-phospho-alpha-D-ribose 1-diphosphate + ATP. The protein operates within amino-acid biosynthesis; L-histidine biosynthesis; L-histidine from 5-phospho-alpha-D-ribose 1-diphosphate: step 1/9. Its activity is regulated as follows. Feedback inhibited by histidine. Its function is as follows. Catalyzes the condensation of ATP and 5-phosphoribose 1-diphosphate to form N'-(5'-phosphoribosyl)-ATP (PR-ATP). Has a crucial role in the pathway because the rate of histidine biosynthesis seems to be controlled primarily by regulation of HisG enzymatic activity. This chain is ATP phosphoribosyltransferase, found in Nitrobacter winogradskyi (strain ATCC 25391 / DSM 10237 / CIP 104748 / NCIMB 11846 / Nb-255).